We begin with the raw amino-acid sequence, 183 residues long: Ribosome maturation factor RimM (183 aa).

The PRC barrel domain occupies 104–183 (EGDYYWKDLI…TIEVDWDPGF (80 aa)).

It belongs to the RimM family. Binds ribosomal protein uS19.

The protein resides in the cytoplasm. In terms of biological role, an accessory protein needed during the final step in the assembly of 30S ribosomal subunit, possibly for assembly of the head region. Essential for efficient processing of 16S rRNA. May be needed both before and after RbfA during the maturation of 16S rRNA. It has affinity for free ribosomal 30S subunits but not for 70S ribosomes. The protein is Ribosome maturation factor RimM of Cronobacter sakazakii (strain ATCC BAA-894) (Enterobacter sakazakii).